The sequence spans 259 residues: Phosphatidylglycerol--prolipoprotein diacylglyceryl transferase (259 aa).

Transmembrane regions (helical) follow at residues 12-32 (LAIH…VYLA), 41-61 (ISSD…IVGA), 80-100 (IIAI…GALV), and 109-129 (VLNP…AQAI). Arginine 131 is a binding site for a 1,2-diacyl-sn-glycero-3-phospho-(1'-sn-glycerol). 3 helical membrane passes run 167-187 (IPTF…IMMW), 194-214 (LLDG…RLVI), and 226-246 (GIRI…IFVI).

The protein belongs to the Lgt family.

The protein resides in the cell membrane. The enzyme catalyses L-cysteinyl-[prolipoprotein] + a 1,2-diacyl-sn-glycero-3-phospho-(1'-sn-glycerol) = an S-1,2-diacyl-sn-glyceryl-L-cysteinyl-[prolipoprotein] + sn-glycerol 1-phosphate + H(+). It functions in the pathway protein modification; lipoprotein biosynthesis (diacylglyceryl transfer). Functionally, catalyzes the transfer of the diacylglyceryl group from phosphatidylglycerol to the sulfhydryl group of the N-terminal cysteine of a prolipoprotein, the first step in the formation of mature lipoproteins. This is Phosphatidylglycerol--prolipoprotein diacylglyceryl transferase from Streptococcus pyogenes serotype M49 (strain NZ131).